Here is a 95-residue protein sequence, read N- to C-terminus: Co-chaperonin GroES (95 aa).

Belongs to the GroES chaperonin family. As to quaternary structure, heptamer of 7 subunits arranged in a ring. Interacts with the chaperonin GroEL.

It is found in the cytoplasm. In terms of biological role, together with the chaperonin GroEL, plays an essential role in assisting protein folding. The GroEL-GroES system forms a nano-cage that allows encapsulation of the non-native substrate proteins and provides a physical environment optimized to promote and accelerate protein folding. GroES binds to the apical surface of the GroEL ring, thereby capping the opening of the GroEL channel. This Bordetella avium (strain 197N) protein is Co-chaperonin GroES.